The chain runs to 2544 residues: Highly reducing polyketide synthase pkhB (2544 aa).

The region spanning 9–438 (SEPIAIIGMS…GTNAHVILES (430 aa)) is the Ketosynthase family 3 (KS3) domain. Active-site for beta-ketoacyl synthase activity residues include cysteine 182, histidine 317, and histidine 358. Positions 566 to 876 (VFTGQVFRRS…PYWGCLVRDE (311 aa)) are malonyl-CoA:ACP transacylase (MAT) domain. Positions 948 to 1082 (HELLGMPVAG…GMVGIEESAV (135 aa)) are N-terminal hotdog fold. Residues 948-1252 (HELLGMPVAG…VELAALGRGS (305 aa)) form a dehydratase (DH) domain region. In terms of domain architecture, PKS/mFAS DH spans 948 to 1254 (HELLGMPVAG…LAALGRGSSA (307 aa)). Histidine 980 acts as the Proton acceptor; for dehydratase activity in catalysis. Residues 1095-1254 (YTRQPNPQDL…LAALGRGSSA (160 aa)) are C-terminal hotdog fold. The active-site Proton donor; for dehydratase activity is the aspartate 1165. The tract at residues 1398–1573 (SSLRQLSALL…FSGLDLEIYD (176 aa)) is methyltransferase (CMet) domain. Positions 1826 to 2142 (GHLGTLAFAE…TGDQMGKVVL (317 aa)) are enoyl reductase (ER) domain. The tract at residues 2169–2356 (ASYLIVGGVG…GVAIDLGPIS (188 aa)) is ketoreductase (KR) domain. The region spanning 2462-2539 (EGARLIGAAI…ALAGLVAEKS (78 aa)) is the Carrier domain. Serine 2499 is modified (O-(pantetheine 4'-phosphoryl)serine).

It depends on pantetheine 4'-phosphate as a cofactor.

It functions in the pathway secondary metabolite biosynthesis. Its function is as follows. Highly reducing polyketide synthase; part of the pkh gene cluster that mediates the biosynthesis of 2,4-dihydroxy-6-[(3E,5E,7E)-2-oxonona-3,5,7-trienyl]benzaldehyde. The highly reducing polyketide synthase pkhB first produces the (2E,4E,6E)-octa-2,4,6-trienyl strater unit for the non-reducing polyketide synthase pkhA. This octatrienoyl starter is then loaded onto the SAT domain of the NR-PKS pkhA to be condensed with 4 malonyl-CoA units to yield 2,4-dihydroxy-6-[(3E,5E,7E)-2-oxonona-3,5,7-trienyl]benzaldehyde. The sequence is that of Highly reducing polyketide synthase pkhB from Emericella nidulans (strain FGSC A4 / ATCC 38163 / CBS 112.46 / NRRL 194 / M139) (Aspergillus nidulans).